Here is a 196-residue protein sequence, read N- to C-terminus: DnaA initiator-associating protein DiaA (196 aa).

The 163-residue stretch at 34 to 196 (LVHSLLNGNK…DNTLFPHQDD (163 aa)) folds into the SIS domain.

It belongs to the SIS family. DiaA subfamily. In terms of assembly, homotetramer; dimer of dimers.

Functionally, required for the timely initiation of chromosomal replication via direct interactions with the DnaA initiator protein. The polypeptide is DnaA initiator-associating protein DiaA (Citrobacter koseri (strain ATCC BAA-895 / CDC 4225-83 / SGSC4696)).